A 463-amino-acid chain; its full sequence is Kynureninase 2 (463 aa).

Pyridoxal 5'-phosphate-binding positions include Leu134, Thr135, Phe162–Asp165, Asp247, His250, and Tyr272. Position 273 is an N6-(pyridoxal phosphate)lysine (Lys273). Pyridoxal 5'-phosphate-binding residues include Trp312 and Asn340.

Belongs to the kynureninase family. Homodimer. The cofactor is pyridoxal 5'-phosphate.

It localises to the cytoplasm. It catalyses the reaction L-kynurenine + H2O = anthranilate + L-alanine + H(+). It carries out the reaction 3-hydroxy-L-kynurenine + H2O = 3-hydroxyanthranilate + L-alanine + H(+). The protein operates within amino-acid degradation; L-kynurenine degradation; L-alanine and anthranilate from L-kynurenine: step 1/1. It participates in cofactor biosynthesis; NAD(+) biosynthesis; quinolinate from L-kynurenine: step 2/3. Functionally, catalyzes the cleavage of L-kynurenine (L-Kyn) and L-3-hydroxykynurenine (L-3OHKyn) into anthranilic acid (AA) and 3-hydroxyanthranilic acid (3-OHAA), respectively. The chain is Kynureninase 2 (bna5-2) from Aspergillus terreus (strain NIH 2624 / FGSC A1156).